Consider the following 338-residue polypeptide: DNA-directed RNA polymerase subunit alpha (338 aa).

The alpha N-terminal domain (alpha-NTD) stretch occupies residues 1–234 (MIQKNWQELI…DQLNVFVNFE (234 aa)). The interval 250-338 (FNPALLKKVD…ELAKRFEEHY (89 aa)) is alpha C-terminal domain (alpha-CTD).

It belongs to the RNA polymerase alpha chain family. As to quaternary structure, homodimer. The RNAP catalytic core consists of 2 alpha, 1 beta, 1 beta' and 1 omega subunit. When a sigma factor is associated with the core the holoenzyme is formed, which can initiate transcription.

The catalysed reaction is RNA(n) + a ribonucleoside 5'-triphosphate = RNA(n+1) + diphosphate. Its function is as follows. DNA-dependent RNA polymerase catalyzes the transcription of DNA into RNA using the four ribonucleoside triphosphates as substrates. The chain is DNA-directed RNA polymerase subunit alpha from Beijerinckia indica subsp. indica (strain ATCC 9039 / DSM 1715 / NCIMB 8712).